The sequence spans 735 residues: Post-transcriptional regulator MKT1 (735 aa).

Residues 475–722 are interaction with PBP1; the sequence is QVIYNTMEET…ANERMKRAQK (248 aa).

This sequence belongs to the XPG/RAD2 endonuclease family. As to quaternary structure, forms a complex composed of at least MKT1, PBP1, XAC1 and LSM12. Within the complex, interacts (via C-terminus) with PBP1; the interaction is direct. Interacts with RNA-binding protein ZC3H11 (via MKT1-binding motif); the interaction is direct. May interact with RNA-binding proteins CFB1 and CFB2. Interacts with the EIF4E6-EIF4G5 translation initiation complex via EIF4G5; the interaction with EIF4G5 is direct.

The protein localises to the cytoplasm. It is found in the cytosol. It localises to the stress granule. In terms of biological role, involved in post-transcriptional regulation of gene expression. Promotes mRNA stabilization by recruiting a complex containing PBP1, LSM12 and XAC1 to mRNAs. Recruited to mRNAs by sequence-specific RNA binding proteins. May regulate translation through interactions with the EIF4E6-EIF4G5 translation initiation complex. The sequence is that of Post-transcriptional regulator MKT1 from Trypanosoma brucei brucei (strain 927/4 GUTat10.1).